A 240-amino-acid polypeptide reads, in one-letter code: UDP-2,3-diacylglucosamine hydrolase (240 aa).

Residues Asp-7, His-9, Asp-40, Asn-78, and His-113 each coordinate Mn(2+). 78–79 contacts substrate; sequence NR. Substrate is bound by residues Asp-121, Ser-159, Lys-166, and His-194. 2 residues coordinate Mn(2+): His-194 and His-196.

This sequence belongs to the LpxH family. Mn(2+) serves as cofactor.

Its subcellular location is the cell inner membrane. The enzyme catalyses UDP-2-N,3-O-bis[(3R)-3-hydroxytetradecanoyl]-alpha-D-glucosamine + H2O = 2-N,3-O-bis[(3R)-3-hydroxytetradecanoyl]-alpha-D-glucosaminyl 1-phosphate + UMP + 2 H(+). The protein operates within glycolipid biosynthesis; lipid IV(A) biosynthesis; lipid IV(A) from (3R)-3-hydroxytetradecanoyl-[acyl-carrier-protein] and UDP-N-acetyl-alpha-D-glucosamine: step 4/6. In terms of biological role, hydrolyzes the pyrophosphate bond of UDP-2,3-diacylglucosamine to yield 2,3-diacylglucosamine 1-phosphate (lipid X) and UMP by catalyzing the attack of water at the alpha-P atom. Involved in the biosynthesis of lipid A, a phosphorylated glycolipid that anchors the lipopolysaccharide to the outer membrane of the cell. This Pseudomonas putida (strain ATCC 47054 / DSM 6125 / CFBP 8728 / NCIMB 11950 / KT2440) protein is UDP-2,3-diacylglucosamine hydrolase.